The sequence spans 121 residues: Large ribosomal subunit protein eL18 (121 aa).

This sequence belongs to the eukaryotic ribosomal protein eL18 family.

This chain is Large ribosomal subunit protein eL18, found in Methanoregula boonei (strain DSM 21154 / JCM 14090 / 6A8).